The sequence spans 173 residues: Peptide deformylase (173 aa).

Residues cysteine 98 and histidine 140 each coordinate Fe cation. Glutamate 141 is an active-site residue. Residue histidine 144 coordinates Fe cation.

This sequence belongs to the polypeptide deformylase family. Requires Fe(2+) as cofactor.

The enzyme catalyses N-terminal N-formyl-L-methionyl-[peptide] + H2O = N-terminal L-methionyl-[peptide] + formate. In terms of biological role, removes the formyl group from the N-terminal Met of newly synthesized proteins. Requires at least a dipeptide for an efficient rate of reaction. N-terminal L-methionine is a prerequisite for activity but the enzyme has broad specificity at other positions. This chain is Peptide deformylase, found in Caulobacter vibrioides (strain ATCC 19089 / CIP 103742 / CB 15) (Caulobacter crescentus).